A 237-amino-acid chain; its full sequence is MANNEGEMQCGSMLFKQEELQEMSGVNVGGDYVEVMCGCTSHRYGDAVARLRVFPTGDLEITCECTPGCDEDKLTPAAFEKHSGRETARKWKNNVWVIIGGEKVPLSKTVLLKYYNESSKKCSRSNRSQGAKVCHRDEFVGCNDCGKERRFRLRSRDECRLHHNAMGDPNWKCSDFPYDKITCEEEEERGSRKVYRGCTRSPSCKGCTSCVCFGCELCRFSECTCQTCVDFTSNVKA.

An SAND domain is found at 18 to 116; it reads EELQEMSGVN…SKTVLLKYYN (99 aa). Residues 133 to 191 form a CW-type zinc finger; it reads VCHRDEFVGCNDCGKERRFRLRSRDECRLHHNAMGDPNWKCSDFPYDKITCEEEEERGS.

Interacts with HHO5. Associates with ATX1 for trimethylating 'Lys-4' on histone H3 (H3K4me3) at flower MADS box gene loci. Expressed at low levels in seedlings, roots, shoots, leaves, stems, inflorescences, pollen, flowers and siliques, with highest levels dividing tissues including inflorescence.

It localises to the cytoplasm. Its subcellular location is the nucleus. Its function is as follows. Putative transcription factor that acts as a key negative regulator of cell accumulation in shoot and floral meristems. Negatively regulates the size of the WUSCHEL (WUS)-expressing organizing center in inflorescence meristems. May act by down-regulating expression of WUS. Acts as an antirepressor that counteracts EMF1 action through modulation of trimethylated 'Lys-4' on histone H3 (H3K4me3) marks on target gene loci (including genes involved in salt stress response and flower development). Collaboratively with RBL and CYP40/SQN, influences floral meristem (FM) determinacy in an AGAMOUS and SUPERMAN-dependent manner, thus contributing to the floral developmental homeostasis. This chain is Protein ULTRAPETALA 1, found in Arabidopsis thaliana (Mouse-ear cress).